The sequence spans 379 residues: ATP phosphoribosyltransferase regulatory subunit (379 aa).

Belongs to the class-II aminoacyl-tRNA synthetase family. HisZ subfamily. As to quaternary structure, heteromultimer composed of HisG and HisZ subunits.

It is found in the cytoplasm. It participates in amino-acid biosynthesis; L-histidine biosynthesis; L-histidine from 5-phospho-alpha-D-ribose 1-diphosphate: step 1/9. Functionally, required for the first step of histidine biosynthesis. May allow the feedback regulation of ATP phosphoribosyltransferase activity by histidine. The protein is ATP phosphoribosyltransferase regulatory subunit of Sinorhizobium fredii (strain NBRC 101917 / NGR234).